A 353-amino-acid chain; its full sequence is Jasmonate-induced oxygenase 4 (353 aa).

Residues 202 to 302 (VGASLRTNFY…RVSLAFFYNP (101 aa)) enclose the Fe2OG dioxygenase domain. Position 207 (arginine 207) interacts with jasmonate. Positions 209 and 211 each coordinate 2-oxoglutarate. Residues histidine 226, aspartate 228, and histidine 283 each contribute to the Fe cation site. The 2-oxoglutarate site is built by arginine 293 and serine 295. Positions 332 and 336 each coordinate jasmonate.

It belongs to the iron/ascorbate-dependent oxidoreductase family. Requires L-ascorbate as cofactor. The cofactor is Fe(2+).

It catalyses the reaction jasmonate + 2-oxoglutarate + O2 = (1R,2R)-12-hydroxyjasmonate + succinate + CO2. Its function is as follows. 2-oxoglutarate-dependent dioxygenase involved in the oxidation of jasmonate (JA), a stress-induced phytohormone synthesized in response to attack by pathogens and herbivores, which triggers the activation of defense responses via the JA-mediated signaling pathway. Converts JA to 12-hydroxyjasmonate (12OH-JA), an inactive form of JA. Is specific to free JA, and cannot oxidize the bioactive form jasmonoyl-L-isoleucine (JA-Ile) or other JA-amino acid conjugates. Prevents over-accumulation of JA and indirectly its bioactive form JA-Ile under stress response. Acts as a negative regulator of JA-mediated defense signaling, by contributing to 12OH-JA accumulation, which represses JA defense responses upon infection by the fungal pathogen Botrytis cinerea. Acts as a negative regulator of JA-mediated defense responses upon infestation by the herbivorous caterpillar Mamestra brassicae. The sequence is that of Jasmonate-induced oxygenase 4 from Arabidopsis thaliana (Mouse-ear cress).